A 118-amino-acid chain; its full sequence is Cell division protein FtsB (118 aa).

The Cytoplasmic segment spans residues 1-6 (MRNWRW). The helical transmembrane segment at 7 to 24 (LLLVLAALLAWLQHRFWF) threads the bilayer. Over 25–118 (GPGNSGEVRM…DLSQPRREKR (94 aa)) the chain is Periplasmic. Residues 30–66 (GEVRMLQVQIVQQHQENERLRQRNASLAAEVKNLKDG) are a coiled coil. Positions 98–118 (LPNDTSADHGVDLSQPRREKR) are disordered. Residues 103 to 118 (SADHGVDLSQPRREKR) show a composition bias toward basic and acidic residues.

It belongs to the FtsB family. Part of a complex composed of FtsB, FtsL and FtsQ.

The protein resides in the cell inner membrane. Functionally, essential cell division protein. May link together the upstream cell division proteins, which are predominantly cytoplasmic, with the downstream cell division proteins, which are predominantly periplasmic. The polypeptide is Cell division protein FtsB (Xylella fastidiosa (strain M23)).